Consider the following 637-residue polypeptide: Chaperone protein HtpG (637 aa).

Residues 1–335 (MQGTVNSERL…SSDLPLNISR (335 aa)) are a; substrate-binding. The interval 336-559 (ETLQNNKIIE…DGSMDIRMER (224 aa)) is b. Positions 560 to 637 (FLREQKQLNY…RMNSVLSQIN (78 aa)) are c.

It belongs to the heat shock protein 90 family. Homodimer.

It is found in the cytoplasm. Molecular chaperone. Has ATPase activity. In Ehrlichia ruminantium (strain Gardel), this protein is Chaperone protein HtpG.